A 519-amino-acid polypeptide reads, in one-letter code: DNA damage-binding protein CMR1 (519 aa).

Positions 35-92 (AEAGLGPTGKSRAAASSKPRVKKPAPKKIKQEDIAPRRTSSRLKGIEADSEKAKRKAE) are disordered. A compositionally biased stretch (basic residues) spans 53–62 (PRVKKPAPKK). Over residues 78–92 (KGIEADSEKAKRKAE) the composition is skewed to basic and acidic residues. 6 WD repeats span residues 240–280 (PHTR…AVEV), 287–327 (NEDQ…DQAE), 331–371 (LSEK…GKGD), 380–420 (EHES…EWAT), 442–485 (GRWV…LAQL), and 488–519 (DGITAVPAVAKFHPTLDWVAAGTASGKLCLWM).

This sequence belongs to the WD repeat DDB2/WDR76 family.

Its function is as follows. DNA-binding protein that binds to both single- and double-stranded DNA. Binds preferentially to UV-damaged DNA. May be involved in DNA-metabolic processes. The chain is DNA damage-binding protein CMR1 from Phaeosphaeria nodorum (strain SN15 / ATCC MYA-4574 / FGSC 10173) (Glume blotch fungus).